Reading from the N-terminus, the 374-residue chain is Alcohol dehydrogenase 3, mitochondrial (374 aa).

Residues 1 to 26 (MLRLTSARSIVSPLRKGAFGSIRTLA) constitute a mitochondrion transit peptide. Zn(2+) is bound by residues C70, H93, C124, C127, C130, C138, and C180. Residues 204–210 (GAAGGLG), D228, K233, 295–297 (VGL), and R367 contribute to the NAD(+) site.

Belongs to the zinc-containing alcohol dehydrogenase family. As to quaternary structure, homotetramer. The cofactor is Zn(2+).

The protein resides in the mitochondrion matrix. The catalysed reaction is a primary alcohol + NAD(+) = an aldehyde + NADH + H(+). It carries out the reaction a secondary alcohol + NAD(+) = a ketone + NADH + H(+). The polypeptide is Alcohol dehydrogenase 3, mitochondrial (ADH3) (Kluyveromyces lactis (strain ATCC 8585 / CBS 2359 / DSM 70799 / NBRC 1267 / NRRL Y-1140 / WM37) (Yeast)).